We begin with the raw amino-acid sequence, 118 residues long: Large ribosomal subunit protein bL20 (118 aa).

This sequence belongs to the bacterial ribosomal protein bL20 family.

Binds directly to 23S ribosomal RNA and is necessary for the in vitro assembly process of the 50S ribosomal subunit. It is not involved in the protein synthesizing functions of that subunit. In Francisella tularensis subsp. holarctica (strain FTNF002-00 / FTA), this protein is Large ribosomal subunit protein bL20.